Here is a 476-residue protein sequence, read N- to C-terminus: Aspartyl/glutamyl-tRNA(Asn/Gln) amidotransferase subunit B (476 aa).

It belongs to the GatB/GatE family. GatB subfamily. Heterotrimer of A, B and C subunits.

The catalysed reaction is L-glutamyl-tRNA(Gln) + L-glutamine + ATP + H2O = L-glutaminyl-tRNA(Gln) + L-glutamate + ADP + phosphate + H(+). It carries out the reaction L-aspartyl-tRNA(Asn) + L-glutamine + ATP + H2O = L-asparaginyl-tRNA(Asn) + L-glutamate + ADP + phosphate + 2 H(+). Functionally, allows the formation of correctly charged Asn-tRNA(Asn) or Gln-tRNA(Gln) through the transamidation of misacylated Asp-tRNA(Asn) or Glu-tRNA(Gln) in organisms which lack either or both of asparaginyl-tRNA or glutaminyl-tRNA synthetases. The reaction takes place in the presence of glutamine and ATP through an activated phospho-Asp-tRNA(Asn) or phospho-Glu-tRNA(Gln). The protein is Aspartyl/glutamyl-tRNA(Asn/Gln) amidotransferase subunit B of Oleidesulfovibrio alaskensis (strain ATCC BAA-1058 / DSM 17464 / G20) (Desulfovibrio alaskensis).